A 400-amino-acid polypeptide reads, in one-letter code: Succinate--glutarate CoA-transferase (400 aa).

Asp-181 (nucleophile) is an active-site residue.

The protein belongs to the CoA-transferase III family.

The enzyme catalyses glutarate + succinyl-CoA = glutaryl-CoA + succinate. The protein operates within amino-acid degradation. It participates in cofactor biosynthesis; biotin biosynthesis. In terms of biological role, is involved in L-lysine degradation and provides glutaryl-CoA for biotin synthesis. Catalyzes the conversion of glutarate to glutaryl-CoA via the transfer of CoA from succinyl-CoA. The sequence is that of Succinate--glutarate CoA-transferase from Agrobacterium fabrum (strain C58 / ATCC 33970) (Agrobacterium tumefaciens (strain C58)).